A 302-amino-acid chain; its full sequence is tRNA-cytidine(32) 2-sulfurtransferase (302 aa).

The PP-loop motif motif lies at 45–50 (SGGKDS). Positions 120, 123, and 211 each coordinate [4Fe-4S] cluster.

Belongs to the TtcA family. In terms of assembly, homodimer. Mg(2+) serves as cofactor. [4Fe-4S] cluster is required as a cofactor.

It localises to the cytoplasm. It carries out the reaction cytidine(32) in tRNA + S-sulfanyl-L-cysteinyl-[cysteine desulfurase] + AH2 + ATP = 2-thiocytidine(32) in tRNA + L-cysteinyl-[cysteine desulfurase] + A + AMP + diphosphate + H(+). It functions in the pathway tRNA modification. Its function is as follows. Catalyzes the ATP-dependent 2-thiolation of cytidine in position 32 of tRNA, to form 2-thiocytidine (s(2)C32). The sulfur atoms are provided by the cysteine/cysteine desulfurase (IscS) system. This chain is tRNA-cytidine(32) 2-sulfurtransferase, found in Aeromonas hydrophila subsp. hydrophila (strain ATCC 7966 / DSM 30187 / BCRC 13018 / CCUG 14551 / JCM 1027 / KCTC 2358 / NCIMB 9240 / NCTC 8049).